The chain runs to 176 residues: Ribosome rescue factor SmrB (176 aa).

In terms of domain architecture, Smr spans 97-172; that stretch reads LDMHGMTQQE…GDGALLVLLS (76 aa).

Belongs to the SmrB family. In terms of assembly, associates with collided ribosomes, but not with correctly translating polysomes.

Its function is as follows. Acts as a ribosome collision sensor. Detects stalled/collided disomes (pairs of ribosomes where the leading ribosome is stalled and a second ribosome has collided with it) and endonucleolytically cleaves mRNA at the 5' boundary of the stalled ribosome. Stalled/collided disomes form a new interface (primarily via the 30S subunits) that binds SmrB. Cleaved mRNA becomes available for tmRNA ligation, leading to ribosomal subunit dissociation and rescue of stalled ribosomes. This Vibrio campbellii (strain ATCC BAA-1116) protein is Ribosome rescue factor SmrB.